A 57-amino-acid chain; its full sequence is Small ribosomal subunit protein bS21 (57 aa).

A disordered region spans residues 22-57; sequence QCSKSGVLSEAKKRKHYEKPSEKRKRKATEKRNSRK. The span at 33–57 shows a compositional bias: basic residues; it reads KKRKHYEKPSEKRKRKATEKRNSRK.

The protein belongs to the bacterial ribosomal protein bS21 family.

This chain is Small ribosomal subunit protein bS21, found in Natranaerobius thermophilus (strain ATCC BAA-1301 / DSM 18059 / JW/NM-WN-LF).